The sequence spans 449 residues: Xylose isomerase (449 aa).

Residues His103 and Asp106 contribute to the active site. Positions 234, 270, 273, 298, 309, 311, and 342 each coordinate Mg(2+).

The protein belongs to the xylose isomerase family. As to quaternary structure, homotetramer. It depends on Mg(2+) as a cofactor.

Its subcellular location is the cytoplasm. The enzyme catalyses alpha-D-xylose = alpha-D-xylulofuranose. The protein is Xylose isomerase of Levilactobacillus brevis (Lactobacillus brevis).